Reading from the N-terminus, the 401-residue chain is Probable tRNA sulfurtransferase (401 aa).

A THUMP domain is found at 60–165 (EPIIDKLKNV…QEGTYITCHD (106 aa)). ATP-binding positions include 183–184 (ML), 208–209 (HF), Arg-265, Gly-287, and Gln-296.

It belongs to the ThiI family.

The protein localises to the cytoplasm. The enzyme catalyses [ThiI sulfur-carrier protein]-S-sulfanyl-L-cysteine + a uridine in tRNA + 2 reduced [2Fe-2S]-[ferredoxin] + ATP + H(+) = [ThiI sulfur-carrier protein]-L-cysteine + a 4-thiouridine in tRNA + 2 oxidized [2Fe-2S]-[ferredoxin] + AMP + diphosphate. It carries out the reaction [ThiS sulfur-carrier protein]-C-terminal Gly-Gly-AMP + S-sulfanyl-L-cysteinyl-[cysteine desulfurase] + AH2 = [ThiS sulfur-carrier protein]-C-terminal-Gly-aminoethanethioate + L-cysteinyl-[cysteine desulfurase] + A + AMP + 2 H(+). The protein operates within cofactor biosynthesis; thiamine diphosphate biosynthesis. Catalyzes the ATP-dependent transfer of a sulfur to tRNA to produce 4-thiouridine in position 8 of tRNAs, which functions as a near-UV photosensor. Also catalyzes the transfer of sulfur to the sulfur carrier protein ThiS, forming ThiS-thiocarboxylate. This is a step in the synthesis of thiazole, in the thiamine biosynthesis pathway. The sulfur is donated as persulfide by IscS. The polypeptide is Probable tRNA sulfurtransferase (Geobacillus sp. (strain WCH70)).